The chain runs to 611 residues: Brain-enriched guanylate kinase-associated protein (611 aa).

At Y156 the chain carries Phosphotyrosine. Phosphoserine is present on residues S219, S248, and S265. Residue T268 is modified to Phosphothreonine. 3 positions are modified to phosphoserine: S284, S364, and S391. R399 bears the Asymmetric dimethylarginine mark. Phosphoserine occurs at positions 474, 484, 494, 496, 519, 521, and 525. The segment at 520 to 611 is disordered; it reads LSPSRSADPL…KAQLYGTLLN (92 aa). Basic and acidic residues predominate over residues 554–563; sequence EPEHGSRDSL. 2 positions are modified to phosphoserine: S571 and S581.

In terms of assembly, interacts with DLG4 and DLGAP1 and forms a ternary complex. As to expression, brain-specific. Expressed in neurons and rather enriched at synaptic junctions.

Its subcellular location is the cytoplasm. The protein resides in the membrane. Functionally, may sustain the structure of the postsynaptic density (PSD). The protein is Brain-enriched guanylate kinase-associated protein (Begain) of Rattus norvegicus (Rat).